A 233-amino-acid polypeptide reads, in one-letter code: Large ribosomal subunit protein uL1 (233 aa).

Belongs to the universal ribosomal protein uL1 family. As to quaternary structure, part of the 50S ribosomal subunit.

Binds directly to 23S rRNA. The L1 stalk is quite mobile in the ribosome, and is involved in E site tRNA release. Functionally, protein L1 is also a translational repressor protein, it controls the translation of the L11 operon by binding to its mRNA. This is Large ribosomal subunit protein uL1 from Vibrio campbellii (strain ATCC BAA-1116).